The following is an 844-amino-acid chain: Protein translocase subunit SecA (844 aa).

ATP is bound by residues Gln-89, 107 to 111 (GEGKT), and Asp-497. 4 residues coordinate Zn(2+): Cys-829, Cys-831, Cys-840, and His-841.

It belongs to the SecA family. In terms of assembly, monomer and homodimer. Part of the essential Sec protein translocation apparatus which comprises SecA, SecYEG and auxiliary proteins SecDF. Other proteins may also be involved. It depends on Zn(2+) as a cofactor.

Its subcellular location is the cell membrane. It is found in the cytoplasm. It catalyses the reaction ATP + H2O + cellular proteinSide 1 = ADP + phosphate + cellular proteinSide 2.. In terms of biological role, part of the Sec protein translocase complex. Interacts with the SecYEG preprotein conducting channel. Has a central role in coupling the hydrolysis of ATP to the transfer of proteins into and across the cell membrane, serving as an ATP-driven molecular motor driving the stepwise translocation of polypeptide chains across the membrane. The polypeptide is Protein translocase subunit SecA (Streptococcus suis (strain 98HAH33)).